The primary structure comprises 835 residues: U-box domain-containing protein 35 (835 aa).

Disordered stretches follow at residues 1 to 22 (MSRSPDKLALPPPPPPPPSRTV), 177 to 303 (VRPS…SSNR), and 410 to 457 (EKEK…LEGT). The segment covering 10 to 19 (LPPPPPPPPS) has biased composition (pro residues). Over residues 195-218 (RTNSSSGSSGPTSDSSDVMSSAHD) the composition is skewed to low complexity. Polar residues predominate over residues 269–282 (SSINRSSTDTTSRW). 2 stretches are compositionally biased toward basic and acidic residues: residues 285-295 (RRRDYEERKEA) and 410-455 (EKEK…EKLE). Residues 340-459 (QSYTDNQVNL…EKEKLEGTLG (120 aa)) adopt a coiled-coil conformation. The Protein kinase domain occupies 480-745 (FSEELKIGMG…DLKDQILPAL (266 aa)). Residues 486 to 494 (IGMGAYGAV) and lysine 507 each bind ATP. Aspartate 602 functions as the Proton acceptor in the catalytic mechanism. One can recognise a U-box domain in the interval 765–835 (QPPTHFICPL…TAIMEWRSTR (71 aa)).

The protein belongs to the protein kinase superfamily. Ser/Thr protein kinase family.

The catalysed reaction is L-seryl-[protein] + ATP = O-phospho-L-seryl-[protein] + ADP + H(+). The enzyme catalyses L-threonyl-[protein] + ATP = O-phospho-L-threonyl-[protein] + ADP + H(+). It carries out the reaction S-ubiquitinyl-[E2 ubiquitin-conjugating enzyme]-L-cysteine + [acceptor protein]-L-lysine = [E2 ubiquitin-conjugating enzyme]-L-cysteine + N(6)-ubiquitinyl-[acceptor protein]-L-lysine.. It participates in protein modification; protein ubiquitination. Functionally, functions as an E3 ubiquitin ligase. The protein is U-box domain-containing protein 35 (PUB35) of Arabidopsis thaliana (Mouse-ear cress).